Consider the following 325-residue polypeptide: Foldase protein PrsA (325 aa).

The signal sequence occupies residues 1 to 20; it reads MKLMNKIIVPVTASALLLGA. Cys21 carries the N-palmitoyl cysteine lipid modification. Cys21 carries S-diacylglycerol cysteine lipidation. In terms of domain architecture, PpiC spans 139–245; that stretch reads ENSKKASHIL…YGYHIIKADK (107 aa). Disordered stretches follow at residues 159 to 202 and 303 to 325; these read EGLS…KKDG and PDKI…NSGS.

Belongs to the PrsA family.

It localises to the cell membrane. It carries out the reaction [protein]-peptidylproline (omega=180) = [protein]-peptidylproline (omega=0). Its function is as follows. Plays a major role in protein secretion by helping the post-translocational extracellular folding of several secreted proteins. The polypeptide is Foldase protein PrsA (Staphylococcus epidermidis (strain ATCC 12228 / FDA PCI 1200)).